An 878-amino-acid chain; its full sequence is MFNFLFSNKINQYQRIVKQINSLDSTYNKYSDQELKQQTNKLKDQIIATQDIDTILPKAFAITKEAIKRATGLLLFDVQLIGAIILNQGKIAEMKTGEGKTLVAMLTAYLNSLFNKGVHIVTVNEYLAKRDATLAKQIFEYLNIHIGIIDQSMHSQERKKQYSCDITYLTNSELGFDYLRDNMAIQKEDLVQRDFFFAIIDEIDSILIDEARTPLIISGPANNKLTEYLEANKVANLLNQNTDYEIDEKNKNIILNENGIKKSENILDINNLYDIQKPWIKYILNALKAKEIFIKNKDYIVKNNEIVIVDEFTGRIMEGRRWSDGLHQAIEAKEKQKIQQENKTLASITYQNLFLLYEKLSGMTGTAKTEEAELEQIYKLKVVEIPTNKLNQRKDLSDLVYKTEYVKWKAVANECFDMYQIGRPTLVGTTSIEKSELLAKILKELQVPYNLLNRKPENITRESEIITQAGRKYTITISTNMAGRGTDIILGGNPQILAKTALTIHINKILNLTQYNTNYKIENEITYILNSINNTLLINNIDINSQDISQSINNIINNNMIQDAKSYKISNIYKIVLNKYKQLCHNEKQEIITLGGLYVIGTERHESRRIDNQLRGRSGRQGDLRSSRFFLSLQDNLLKIFGGDKISDFMQNLNIDEDMPIESSILNKSLSSAQKKIEAYFYDVRKQLFEYDEVLNNQRQAIYIERKRLLKSNYTRDCILEYAESTIEEMLVTYNQQTDISEKTKILSKILKLLNLNIYINNNILLNMEENDIKSFLFEQLRITYDLRESYLEQLRPGLIRQLEKYYLLQQIDYAWQEHINKISILKESIGWRSYGQQDPLIEYKNEAFNLFINMVTYIRQTVIYLTMRSRLIVNIDN.

Residues Gln-79, Gly-97 to Thr-101, and Asp-487 contribute to the ATP site.

This sequence belongs to the SecA family.

It localises to the plastid. Its subcellular location is the chloroplast stroma. It is found in the chloroplast thylakoid membrane. The catalysed reaction is ATP + H2O + cellular proteinSide 1 = ADP + phosphate + cellular proteinSide 2.. Its function is as follows. Has a central role in coupling the hydrolysis of ATP to the transfer of proteins across the thylakoid membrane. The protein is Protein translocase subunit SecA of Antithamnion sp. (Red alga).